The chain runs to 347 residues: Gas vesicle ATPase GvpN (347 aa).

The tract at residues 1-50 is disordered; that stretch reads MTNSSRERKVRGSQIRTSRREKQDKNARNRTEKELTRLENHQTHRTKNGT. The segment covering 18-42 has biased composition (basic and acidic residues); the sequence is SRREKQDKNARNRTEKELTRLENHQ. Residue 91–98 participates in ATP binding; it reads GPTGCGKT.

It belongs to the CbbQ/NirQ/NorQ/GpvN family. In terms of assembly, forms homodimers, a GvpN-GvpO heterodimer, interacts with GvpC and GvpL, might interact with GvpA.

It is found in the gas vesicle. It localises to the cytoplasm. The enzyme catalyses ATP + H2O = ADP + phosphate + H(+). An ATPase that functions in gas vesicle formation. A minor component of the gas vesicle, also found in soluble extracts. Gas vesicles are hollow, gas filled proteinaceous nanostructures found in some microorganisms. They allow positioning of halobacteria at the optimal depth for growth in the poorly aerated, shallow brine pools of their habitat. In terms of biological role, expression of a 9.5 kb mc-vac DNA fragment containing 2 divergently transcribed regions (gvpD-gvpE-gvpF-gvpG-gvpH-gvpI-gvpJ-gvpK-gvpL-gvpM and gvpA-gvpC-gvpN-gvpO) allows H.volcanii to produce gas vesicles. The sequence is that of Gas vesicle ATPase GvpN from Haloferax mediterranei (strain ATCC 33500 / DSM 1411 / JCM 8866 / NBRC 14739 / NCIMB 2177 / R-4) (Halobacterium mediterranei).